Consider the following 324-residue polypeptide: Ribose 1,5-bisphosphate isomerase (324 aa).

Residues 22–25 and Arg-65 contribute to the substrate site; that span reads RGAG. Cys-135 serves as the catalytic Proton acceptor. Substrate is bound at residue 137 to 139; it reads SKA. Asp-204 functions as the Proton donor in the catalytic mechanism. Substrate contacts are provided by residues 214–215 and Lys-240; that span reads NK.

This sequence belongs to the eIF-2B alpha/beta/delta subunits family. R15P isomerase subfamily.

It carries out the reaction alpha-D-ribose 1,5-bisphosphate = D-ribulose 1,5-bisphosphate. Catalyzes the isomerization of ribose 1,5-bisphosphate (R15P) to ribulose 1,5-bisphosphate (RuBP), the CO(2) acceptor and substrate for RubisCO. Functions in an archaeal AMP degradation pathway, together with AMP phosphorylase and RubisCO. The chain is Ribose 1,5-bisphosphate isomerase from Pyrococcus horikoshii (strain ATCC 700860 / DSM 12428 / JCM 9974 / NBRC 100139 / OT-3).